The following is a 2364-amino-acid chain: Cytotoxin-L (2364 aa).

The tract at residues 1–91 (MNLVNKAQLQ…EVLELKNNSL (91 aa)) is four-helical bundle. A GT44 domain is found at 96–468 (KNLHFIWIGG…APDVRSTINL (373 aa)). The segment at 96-468 (KNLHFIWIGG…APDVRSTINL (373 aa)) is glucosyltransferase region. Residues 101-103 (IWI), N139, 265-270 (LAAASD), and 286-288 (DVD) contribute to the UDP-alpha-D-glucose site. D288, E515, and S518 together coordinate Mg(2+). Residue 518–520 (SLW) coordinates UDP-alpha-D-glucose. The autoprocessing region stretch occupies residues 544 to 799 (GEDDNLDFAQ…KSKYLHELST (256 aa)). 2 residues coordinate Zn(2+): E545 and D546. The region spanning 567-774 (LSSMKTRNKE…EESIIKDISS (208 aa)) is the Peptidase C80 domain. Residues Y577, K600, and K647 each coordinate 1D-myo-inositol hexakisphosphate. H653 contacts Zn(2+). The For protease activity role is filled by H653. The active-site Nucleophile; for protease activity is C698. Residue H757 coordinates Zn(2+). Residues K764, K775, and K792 each contribute to the 1D-myo-inositol hexakisphosphate site. The segment at 800 to 1500 (LLQEIRNNAN…ESIIRNIYMP (701 aa)) is translocation region. 5 interaction with host SEMA6A and SEMA6B regions span residues 1433 to 1438 (CMKLIE), 1466 to 1471 (DNETKY), 1484 to 1495 (FTAEFSNESIIR), 1504 to 1511 (NLFIYSSK), and 1596 to 1601 (YNNLDP). Cell wall-binding repeat units lie at residues 1813–1832 (EFGL…FGNM), 1833–1852 (VSGL…PKNN), 1854–1873 (ITGF…TKSG), 1876–1895 (SIGE…QGIL), 1926–1945 (FIGK…NYRA), 1946–1965 (AVEW…KTGE), 1967–1986 (LKGL…NGIM), 1987–2006 (QTGF…DGVM), 2007–2026 (QVGY…NGER), 2057–2076 (YNGI…SNTA), 2077–2097 (VVGW…NTAE), 2099–2118 (CIGL…NGIR), 2119–2138 (QLGF…SGKI), 2139–2158 (ELGY…SGLV), 2209–2224 (ETGW…YFDP), 2227–2249 (KKAY…NGIM), 2250–2269 (RTGL…DGKM), 2270–2289 (QFGY…DGKM), 2320–2339 (YTGW…EYIA), and 2340–2359 (ATGS…DTAE). Residues 1835-2364 (GLIYINDSLY…PDTAELVVSE (530 aa)) form a receptor-binding (CROPS) region region.

It belongs to the clostridial glucosylating toxin (LCGT) family. Homomultimer; forms an inactive homomultimer at pH 8, which dissociates at pH 4, leading to cytotoxicity. Interacts with host SEMA6A; interaction promotes toxin entry into host cell. Interacts with host SEMA6B; interaction promotes toxin entry into host cell. It depends on Zn(2+) as a cofactor. Mn(2+) serves as cofactor. Mg(2+) is required as a cofactor. Undergoes autocatalytic cleavage to release the N-terminal part (Glucosyltransferase TcsL), which constitutes the active part of the toxin, in the host cytosol. 1D-myo-inositol hexakisphosphate-binding (InsP6) activates the peptidase C80 domain and promotes autoprocessing.

It is found in the secreted. The protein localises to the host endosome membrane. It localises to the host cytoplasm. The protein resides in the host cytosol. Its subcellular location is the host cell membrane. It carries out the reaction L-threonyl-[protein] + UDP-alpha-D-glucose = 3-O-(alpha-D-glucosyl)-L-threonyl-[protein] + UDP + H(+). With respect to regulation, protease activity is activated upon binding to 1D-myo-inositol hexakisphosphate (InsP6), which induces conformational reorganization. In terms of biological role, precursor of a cytotoxin that targets the vascular endothelium, inducing an anti-inflammatory effect and resulting in lethal toxic shock syndrome. TcsL constitutes the main toxin that mediates the pathology of P.sordellii infection, an anaerobic Gram-positive bacterium found in soil and in the gastrointestinal and vaginal tracts of animals and humans; although the majority of carriers are asymptomatic, pathogenic P.sordellii infections arise rapidly and are highly lethal. This form constitutes the precursor of the toxin: it enters into host cells and mediates autoprocessing to release the active toxin (Glucosyltransferase TcsL) into the host cytosol. Targets vascular endothelium by binding to the semaphorin proteins SEMA6A and SEMA6B, and enters host cells via clathrin-mediated endocytosis. Once entered into host cells, acidification in the endosome promotes the membrane insertion of the translocation region and formation of a pore, leading to translocation of the GT44 and peptidase C80 domains across the endosomal membrane. This activates the peptidase C80 domain and autocatalytic processing, releasing the N-terminal part (Glucosyltransferase TcsL), which constitutes the active part of the toxin, in the cytosol. Its function is as follows. Active form of the toxin, which is released into the host cytosol following autoprocessing and inactivates small GTPases. Acts by mediating monoglucosylation of small GTPases of the Ras (H-Ras/HRAS, K-Ras/KRAS and N-Ras/NRAS) family in host cells at the conserved threonine residue located in the switch I region ('Thr-37/35'), using UDP-alpha-D-glucose as the sugar donor. Also able to catalyze monoglucosylation of some members of the Rho family (Rac1 and Rap2A), but with less efficiency than with Ras proteins. Monoglucosylation of host small GTPases completely prevents the recognition of the downstream effector, blocking the GTPases in their inactive form and leading to apoptosis. Induces an anti-inflammatory effect, mainly by inactivating Ras proteins which results in blockage of the cell cycle and killing of immune cells. The absence or moderate local inflammatory response allows C.sordellii spreading in deep tissues, production of toxin which is released in the general circulation and causes a toxic shock syndrome. The sequence is that of Cytotoxin-L from Paraclostridium sordellii (strain ATCC 9714 / DSM 2141 / JCM 3814 / LMG 15708 / NCIMB 10717 / 211) (Clostridium sordellii).